The chain runs to 247 residues: MADS-box protein defh21 (247 aa).

The region spanning 1–61 is the MADS-box domain; sequence MGRGKIEVKR…GKLTEYCTPP (61 aa). Positions 91–183 constitute a K-box domain; sequence NDQVIKELTR…WLMSNQIQRQ (93 aa).

As to expression, expressed exclusively in a few inner cell layers of the inner integuments of the ovules.

The protein resides in the nucleus. In terms of biological role, probable transcription factor. This is MADS-box protein defh21 (DEFH21) from Antirrhinum majus (Garden snapdragon).